Consider the following 391-residue polypeptide: ATP phosphoribosyltransferase regulatory subunit (391 aa).

It belongs to the class-II aminoacyl-tRNA synthetase family. HisZ subfamily. Heteromultimer composed of HisG and HisZ subunits.

It is found in the cytoplasm. Its pathway is amino-acid biosynthesis; L-histidine biosynthesis; L-histidine from 5-phospho-alpha-D-ribose 1-diphosphate: step 1/9. Functionally, required for the first step of histidine biosynthesis. May allow the feedback regulation of ATP phosphoribosyltransferase activity by histidine. The protein is ATP phosphoribosyltransferase regulatory subunit of Clostridium kluyveri (strain ATCC 8527 / DSM 555 / NBRC 12016 / NCIMB 10680 / K1).